The sequence spans 360 residues: Histidinol-phosphate aminotransferase (360 aa).

K224 carries the post-translational modification N6-(pyridoxal phosphate)lysine.

It belongs to the class-II pyridoxal-phosphate-dependent aminotransferase family. Histidinol-phosphate aminotransferase subfamily. It depends on pyridoxal 5'-phosphate as a cofactor.

The catalysed reaction is L-histidinol phosphate + 2-oxoglutarate = 3-(imidazol-4-yl)-2-oxopropyl phosphate + L-glutamate. The protein operates within amino-acid biosynthesis; L-histidine biosynthesis; L-histidine from 5-phospho-alpha-D-ribose 1-diphosphate: step 7/9. The protein is Histidinol-phosphate aminotransferase of Methanococcoides burtonii (strain DSM 6242 / NBRC 107633 / OCM 468 / ACE-M).